Here is a 589-residue protein sequence, read N- to C-terminus: MYIGAFQDTLFVDMLEYFGWVTVGKEYLDIYRPNGVPVAPNAVAASISGKEEMKQDNQTSTDSMSTSTQQETDASNEDIERAMDTDNGLDKAMSGGQGVFGTEEDDSSTKDASKPEEADPFLVEFLGEDDPRKPWNWSFSKKTFVIVQLMVLTCINYMGSSIYTPGQEQIQHEFHVGHVVGTLNLSMYVLGYAIGPIIFSPLSEVSSIGRMPLYLWTFILFTILQVACALVRNIAGLVILRFITGILCSPVLATGGASVGDVCFPRYVPRFLGAWAVGAVAAPVMAPILGAAMVVAKDWRWIFWLMLFMCGATLLSIIFFFPETSHECILHRRAKRLRKLTGDDRYYTKKEKQEEALPVSVFIKNTLWRPIKMIALEPIILAFDVYIALCYGAFYLFFEAFPIVFAGIYHFTLVEVGLAFLGFCVGCVFAYTALIIFQEKVIRKKFLEGKFRPELFLILAMCLGWCLPFSLFFFGWTARIHWILPIIAELFFVLSVFNLFQATFSYLAVCYPEYVASVFAGNGLCRGAFAAAFPLFGKAMYDRLSTKKYPVAWGSTLIGFITVVLSLIPFVLYKYGPALRARSRFSPDS.

Positions 50-116 are disordered; sequence KEEMKQDNQT…SSTKDASKPE (67 aa). Residues 56–73 show a composition bias toward low complexity; that stretch reads DNQTSTDSMSTSTQQETD. N57 carries an N-linked (GlcNAc...) asparagine glycan. A compositionally biased stretch (basic and acidic residues) spans 107–116; it reads SSTKDASKPE. The N-linked (GlcNAc...) asparagine glycan is linked to N136. The next 12 helical transmembrane spans lie at 143 to 163, 179 to 199, 211 to 231, 234 to 254, 275 to 295, 301 to 321, 378 to 398, 417 to 437, 455 to 475, 480 to 500, 516 to 536, and 551 to 571; these read TFVI…SSIY, VVGT…PIIF, MPLY…CALV, IAGL…VLAT, WAVG…AMVV, WIFW…IFFF, PIIL…YLFF, GLAF…LIIF, LFLI…FFFG, IHWI…FNLF, ASVF…FPLF, and VAWG…IPFV.

Belongs to the major facilitator superfamily.

It localises to the cell membrane. In terms of biological role, multidrug transporter that confers resistance to 5-flucytosine (5-FC) and clotrimazole. Further confers azole drug resistance. Plays direct roles in extrusion of 5-flucytosine and clotrimazole. This chain is Multidrug transporter FLR2, found in Candida glabrata (strain ATCC 2001 / BCRC 20586 / JCM 3761 / NBRC 0622 / NRRL Y-65 / CBS 138) (Yeast).